The primary structure comprises 921 residues: Protein translocase subunit SecA (921 aa).

ATP-binding positions include glutamine 87, 105-109, and aspartate 516; that span reads GEGKT. Zn(2+) contacts are provided by cysteine 905, cysteine 907, cysteine 916, and histidine 917.

The protein belongs to the SecA family. Monomer and homodimer. Part of the essential Sec protein translocation apparatus which comprises SecA, SecYEG and auxiliary proteins SecDF-YajC and YidC. It depends on Zn(2+) as a cofactor.

The protein localises to the cell inner membrane. It localises to the cytoplasm. The catalysed reaction is ATP + H2O + cellular proteinSide 1 = ADP + phosphate + cellular proteinSide 2.. In terms of biological role, part of the Sec protein translocase complex. Interacts with the SecYEG preprotein conducting channel. Has a central role in coupling the hydrolysis of ATP to the transfer of proteins into and across the cell membrane, serving both as a receptor for the preprotein-SecB complex and as an ATP-driven molecular motor driving the stepwise translocation of polypeptide chains across the membrane. In Albidiferax ferrireducens (strain ATCC BAA-621 / DSM 15236 / T118) (Rhodoferax ferrireducens), this protein is Protein translocase subunit SecA.